Consider the following 927-residue polypeptide: Isoleucine--tRNA ligase (927 aa).

A 'HIGH' region motif is present at residues 60-70; sequence PYANGNIHLGH. Glu557 provides a ligand contact to L-isoleucyl-5'-AMP. Residues 598–602 carry the 'KMSKS' region motif; that stretch reads KMSKS. Lys601 serves as a coordination point for ATP. Zn(2+) contacts are provided by Cys895, Cys898, Cys915, and Cys918.

This sequence belongs to the class-I aminoacyl-tRNA synthetase family. IleS type 1 subfamily. Monomer. Zn(2+) serves as cofactor.

Its subcellular location is the cytoplasm. The catalysed reaction is tRNA(Ile) + L-isoleucine + ATP = L-isoleucyl-tRNA(Ile) + AMP + diphosphate. Its function is as follows. Catalyzes the attachment of isoleucine to tRNA(Ile). As IleRS can inadvertently accommodate and process structurally similar amino acids such as valine, to avoid such errors it has two additional distinct tRNA(Ile)-dependent editing activities. One activity is designated as 'pretransfer' editing and involves the hydrolysis of activated Val-AMP. The other activity is designated 'posttransfer' editing and involves deacylation of mischarged Val-tRNA(Ile). In Syntrophomonas wolfei subsp. wolfei (strain DSM 2245B / Goettingen), this protein is Isoleucine--tRNA ligase.